Consider the following 361-residue polypeptide: uncharacterized protein (361 aa).

This is an uncharacterized protein from Schizosaccharomyces pombe (strain 972 / ATCC 24843) (Fission yeast).